The primary structure comprises 263 residues: Ribonuclease HII (263 aa).

An RNase H type-2 domain is found at 39–257; the sequence is AFFTGIDEAG…VKPAAAPHAA (219 aa). A divalent metal cation-binding residues include aspartate 45, glutamate 46, and aspartate 157.

The protein belongs to the RNase HII family. Mn(2+) serves as cofactor. Requires Mg(2+) as cofactor.

The protein resides in the cytoplasm. It catalyses the reaction Endonucleolytic cleavage to 5'-phosphomonoester.. Its function is as follows. Endonuclease that specifically degrades the RNA of RNA-DNA hybrids. In Oleidesulfovibrio alaskensis (strain ATCC BAA-1058 / DSM 17464 / G20) (Desulfovibrio alaskensis), this protein is Ribonuclease HII.